Consider the following 346-residue polypeptide: N-acetyl-gamma-glutamyl-phosphate reductase (346 aa).

The active site involves Cys150.

The protein belongs to the NAGSA dehydrogenase family. Type 1 subfamily.

Its subcellular location is the cytoplasm. It catalyses the reaction N-acetyl-L-glutamate 5-semialdehyde + phosphate + NADP(+) = N-acetyl-L-glutamyl 5-phosphate + NADPH + H(+). It functions in the pathway amino-acid biosynthesis; L-arginine biosynthesis; N(2)-acetyl-L-ornithine from L-glutamate: step 3/4. Catalyzes the NADPH-dependent reduction of N-acetyl-5-glutamyl phosphate to yield N-acetyl-L-glutamate 5-semialdehyde. The sequence is that of N-acetyl-gamma-glutamyl-phosphate reductase from Brevibacillus brevis (strain 47 / JCM 6285 / NBRC 100599).